Here is a 112-residue protein sequence, read N- to C-terminus: MEKQDLEKIESDIINDWTEADDLDDALDFLFMEKVSEFKIKFKDPLKVTEEEYRELLGNYDSSNSVSSNGITIDQYTYDEDDDIMYKLEFTYRKEDNKIYIYEVQGWREKKK.

This is an uncharacterized protein from Sulfolobus islandicus filamentous virus (isolate Iceland/Hveragerdi) (SIFV).